The chain runs to 757 residues: MADSSSSLHPLCERISHKSYVLRAVDLTILGLLYSLLLYRILHISENDNVWLLAFFCESCFSLVWLIFTCLKWSPAEDIPYINTLNERVHDLPSLDMFVPTADTVRESPIITVNTVLSLLAVNYPANKLACYVSDDGCSPLTYFSLKEASKFVKIWAPFCKKYNVRVRAPFRYFLNPLVATDDSVFSKDWKMMKREYVKLCRKVEDATGDSHWLDADDDFEAFSNTKPNDHSTIVKVVWENKGGVGDEKEVPHLVYISREKRPNYLHHYKTGAMNFLLRVSGLMTNAPYTLNVDCDMYANEPDVVRQAMCVFLQNSKNSNHCAFVQFPQKFYDSYTNELAVLQSILGRGVAGIQGPFYIGTGCFHTRRVMYGLSSDDLEDNGNISQVATREFLAEDSLVRKYGNSKELVKSVVDALQRKSNPQKSLANLIEAAQEVGHCHYEYQTSWGNLGWMYDSVAEDINTSVGIHLRGWTSSFISPDPPAFIGSTPTLGLEAIVQQRRWATGAIEVLFNKQSPFMGMFHGKIKFRQRLAYFWALMCLRSIPELIYCLLPAYCLLHDSALFPKGPCLCTIVTLVGMHCLYSLWQFMSLGFSVQSWYVVQSLWRIIATSSWLFSIQDIILKLLGISQIGFVIAKKTIPETKSVYESKPSQGEDDVPKLNLGKFEFDSSGLFIPGTFIMLVNLAALAGYLVRLQRSSCSHGGGGSGLAEACGCILVVMLFLPFLKGLFEHGKYSIPLSTLSKAAFLTVLFVFFCVGK.

2 helical membrane-spanning segments follow: residues 24–44 and 50–70; these read AVDL…ILHI and VWLL…IFTC. Residues D136 and D460 contribute to the active site. 6 helical membrane-spanning segments follow: residues 531 to 551, 572 to 592, 613 to 633, 671 to 691, 704 to 724, and 735 to 755; these read LAYF…YCLL, IVTL…SLGF, LFSI…GFVI, LFIP…GYLV, GSGL…LPFL, and IPLS…FFCV.

It belongs to the glycosyltransferase 2 family. Plant cellulose synthase-like B subfamily. In terms of tissue distribution, expressed in young seedlings, primarily in the vascular tissue. Expressed in the root cap.

Its subcellular location is the golgi apparatus membrane. In terms of biological role, thought to be a Golgi-localized beta-glycan synthase that polymerize the backbones of noncellulosic polysaccharides (hemicelluloses) of plant cell wall. This Arabidopsis thaliana (Mouse-ear cress) protein is Cellulose synthase-like protein B5 (CSLB5).